The primary structure comprises 956 residues: DNA repair endonuclease UVH1 (956 aa).

A Nuclear localization signal motif is present at residues arginine 256–glutamine 272. Disordered stretches follow at residues histidine 343–alanine 363, threonine 516–glycine 593, and serine 697–lysine 718. Residues serine 697–threonine 711 show a composition bias toward polar residues. In terms of domain architecture, ERCC4 spans glutamine 725–glutamine 805.

Belongs to the XPF family. As to quaternary structure, heterodimer with ERCC1/RAD10. Isoform 1 and isoform 2 are widely expressed, predominantly in flowers, meristems and stems. Isoform 3 is detected at low levels.

The protein localises to the nucleus. Seems to be involved in nucleotide excision repair (NER) of damaged DNA (dark repair mechanism). Involved in repair of UV light, and probably oxidative damage. The UVH1/RAD1-ERCC1/RAD10 complex may act as an endonuclease making DNA incision 5' to the lesion site. In vitro, is implicated in double strand breaks (DSBs) repair and is required for homologous recombination in the presence of non-homologous overhangs. May mediate the induction of a DNA-damage sensitive cell-cycle checkpoint during the G2 phase. The protein is DNA repair endonuclease UVH1 (UVH1) of Arabidopsis thaliana (Mouse-ear cress).